Here is a 356-residue protein sequence, read N- to C-terminus: Protein-glutamate methylesterase/protein-glutamine glutaminase 2 (356 aa).

Residues 4–121 (KVLIVDDSAV…KGFLEESSHE (118 aa)) enclose the Response regulatory domain. Position 55 is a 4-aspartylphosphate (aspartate 55). One can recognise a CheB-type methylesterase domain in the interval 169–356 (FATTERIIAI…LELIAKAICR (188 aa)). Catalysis depends on residues serine 181, histidine 207, and aspartate 303.

It belongs to the CheB family. Post-translationally, phosphorylated by CheA. Phosphorylation of the N-terminal regulatory domain activates the methylesterase activity.

Its subcellular location is the cytoplasm. The catalysed reaction is [protein]-L-glutamate 5-O-methyl ester + H2O = L-glutamyl-[protein] + methanol + H(+). It carries out the reaction L-glutaminyl-[protein] + H2O = L-glutamyl-[protein] + NH4(+). Its function is as follows. Involved in chemotaxis. Part of a chemotaxis signal transduction system that modulates chemotaxis in response to various stimuli. Catalyzes the demethylation of specific methylglutamate residues introduced into the chemoreceptors (methyl-accepting chemotaxis proteins or MCP) by CheR. Also mediates the irreversible deamidation of specific glutamine residues to glutamic acid. The sequence is that of Protein-glutamate methylesterase/protein-glutamine glutaminase 2 from Chromobacterium violaceum (strain ATCC 12472 / DSM 30191 / JCM 1249 / CCUG 213 / NBRC 12614 / NCIMB 9131 / NCTC 9757 / MK).